A 404-amino-acid chain; its full sequence is Proteasomal ubiquitin receptor ADRM1-B (404 aa).

One can recognise a Pru domain in the interval 17–130; that stretch reads SSSKYLVEFR…RKVNEYLNNP (114 aa). 3 disordered regions span residues 128–149, 195–258, and 376–404; these read NNPP…LSAL, GSGG…TSPT, and FAKA…MSLD. Over residues 195-247 the composition is skewed to low complexity; it reads GSGGPTTSSSSSSSRSQSAAVTPSSTTSSTRTTSAPVAPAAAPATTPSPAVSS. Polar residues predominate over residues 248–258; sequence NDGASAATSPT. The DEUBAD domain occupies 278–390; the sequence is TGEGGQQVDL…QSTSSQKERE (113 aa). Over residues 386-395 the composition is skewed to basic and acidic residues; it reads QKERESSEKK.

It belongs to the ADRM1 family. In terms of assembly, component of the 19S proteasome regulatory particle complex. The 26S proteasome consists of a 20S core particle (CP) and two 19S regulatory subunits (RP).

Its subcellular location is the cytoplasm. It localises to the nucleus. Its function is as follows. Component of the 26S proteasome, a multiprotein complex involved in the ATP-dependent degradation of ubiquitinated proteins. This complex plays a key role in the maintenance of protein homeostasis by removing misfolded or damaged proteins, which could impair cellular functions, and by removing proteins whose functions are no longer required. Therefore, the proteasome participates in numerous cellular processes, including cell cycle progression, apoptosis, or DNA damage repair. Within the complex, functions as a proteasomal ubiquitin receptor. This chain is Proteasomal ubiquitin receptor ADRM1-B (adrm1-b), found in Xenopus laevis (African clawed frog).